The chain runs to 1528 residues: 5'-3' exoribonuclease 1 (1528 aa).

Disordered stretches follow at residues 1246–1331 (SKKA…KSSE), 1431–1455 (PPPAPHGFGQPISFPPPPPMTNVSD), and 1470–1528 (LKKF…DEST). Residues 1274 to 1304 (QSEEKLRKERAHDLLNFIKKDTNEKNSESVD) show a composition bias toward basic and acidic residues. Basic residues predominate over residues 1317–1326 (AKKVLLKRPA). Over residues 1500–1517 (SSGTNSTECQSPKSQSNA) the composition is skewed to polar residues. At Thr1506 the chain carries Phosphothreonine. Ser1510 is modified (phosphoserine). Over residues 1518 to 1528 (ADRDNKKDEST) the composition is skewed to basic and acidic residues.

The protein belongs to the 5'-3' exonuclease family. Mg(2+) serves as cofactor.

The protein localises to the cytoplasm. It is found in the perinuclear region. Its subcellular location is the P-body. Its activity is regulated as follows. 3'-phosphoadenosine 5'-phosphate (pAp) is an inhibitor of KEM1. Sodium-induced GCN4 expression reduces pAp accumulation by activating HAL2 expression, and therefore maintains mRNA degradation capacity which is likely to be important for the accurate and rapid adaptation of gene expression to salt stress. Functionally, multifunctional protein that exhibits several independent functions at different levels of the cellular processes. 5'-3' exonuclease component of the nonsense-mediated mRNA decay (NMD) which is a highly conserved mRNA degradation pathway, an RNA surveillance system whose role is to identify and rid cells of mRNA with premature termination codons and thus prevents accumulation of potentially harmful truncated proteins. The NMD pathway has a second role regulating the decay of wild-type mRNAs, and especially mRNAs that are important for telomere functions. Participate in CTH2-mediated and VTS1-mediated mRNA turnover. Involved in the degradation of several hypomodified mature tRNA species and participates in the 5'-processing or the degradation of the snoRNA precursors and rRNA processing. Involved in defense against virus and suppresses viral RNA recombination by rapidly removing the 5'-truncated RNAs, the substrates of recombination, and thus reducing the chance for recombination to occur in the parental strain. Required for the assembly of the virus-like particles of the Ty3 retrotransposon and contributes to the efficient generation of narnavirus 20S RNA by playing a major role in the elimination of the non-viral upstream sequences from the primary transcripts. Degrades single-stranded DNA (ss-DNA) and can renature complementary ss-DNA as well as catalyzes the formation of heteroduplex DNA from circular ss-DNA and homologous linear ds-DNA in vitro. Acts as a microtubule-associated protein which interacts with cytoplasmic microtubules through beta-tubulin and promotes in vitro assembly of tubulin into microtubules. Associates with microtubule functions such as chromosome transmission, nuclear migration, and SPB duplication. Has also a role in G1 to S transition and is involved in nuclear fusion during karyogamy. Required for the expression of ROK1 at the post-transcriptional level and for the alpha-factor induction of the karyogamy genes KAR3 and KAR4. Plays a role in filamentous growth. This is 5'-3' exoribonuclease 1 (XRN1) from Saccharomyces cerevisiae (strain ATCC 204508 / S288c) (Baker's yeast).